The following is a 316-amino-acid chain: Acetyl-coenzyme A carboxylase carboxyl transferase subunit beta (316 aa).

The CoA carboxyltransferase N-terminal domain maps to 39–308 (LWHKCSKCGV…PPHMVLWETM (270 aa)). Positions 43, 46, 62, and 65 each coordinate Zn(2+). Residues 43–65 (CSKCGVLAYTKDLKANQMVCIEC) form a C4-type zinc finger.

The protein belongs to the AccD/PCCB family. Acetyl-CoA carboxylase is a heterohexamer composed of biotin carboxyl carrier protein (AccB), biotin carboxylase (AccC) and two subunits each of ACCase subunit alpha (AccA) and ACCase subunit beta (AccD). Zn(2+) is required as a cofactor.

The protein localises to the cytoplasm. The enzyme catalyses N(6)-carboxybiotinyl-L-lysyl-[protein] + acetyl-CoA = N(6)-biotinyl-L-lysyl-[protein] + malonyl-CoA. The protein operates within lipid metabolism; malonyl-CoA biosynthesis; malonyl-CoA from acetyl-CoA: step 1/1. In terms of biological role, component of the acetyl coenzyme A carboxylase (ACC) complex. Biotin carboxylase (BC) catalyzes the carboxylation of biotin on its carrier protein (BCCP) and then the CO(2) group is transferred by the transcarboxylase to acetyl-CoA to form malonyl-CoA. The sequence is that of Acetyl-coenzyme A carboxylase carboxyl transferase subunit beta from Nostoc punctiforme (strain ATCC 29133 / PCC 73102).